A 274-amino-acid polypeptide reads, in one-letter code: 3-methyl-2-oxobutanoate hydroxymethyltransferase (274 aa).

Mg(2+)-binding residues include aspartate 50 and aspartate 89. 3-methyl-2-oxobutanoate-binding positions include 50–51 (DS), aspartate 89, and lysine 119. Glutamate 121 contributes to the Mg(2+) binding site. Glutamate 188 (proton acceptor) is an active-site residue.

It belongs to the PanB family. As to quaternary structure, homodecamer; pentamer of dimers. Mg(2+) serves as cofactor.

It localises to the cytoplasm. It catalyses the reaction 3-methyl-2-oxobutanoate + (6R)-5,10-methylene-5,6,7,8-tetrahydrofolate + H2O = 2-dehydropantoate + (6S)-5,6,7,8-tetrahydrofolate. Its pathway is cofactor biosynthesis; (R)-pantothenate biosynthesis; (R)-pantoate from 3-methyl-2-oxobutanoate: step 1/2. Catalyzes the reversible reaction in which hydroxymethyl group from 5,10-methylenetetrahydrofolate is transferred onto alpha-ketoisovalerate to form ketopantoate. This Methylorubrum extorquens (strain PA1) (Methylobacterium extorquens) protein is 3-methyl-2-oxobutanoate hydroxymethyltransferase.